Reading from the N-terminus, the 189-residue chain is CASP-like protein 1U2 (189 aa).

The Cytoplasmic portion of the chain corresponds to 1 to 24 (MFGSDDSGCHVMDDDVAPPANGSK). The helical transmembrane segment at 25–45 (AVTLLLRLITLALALTSAVLM) threads the bilayer. Residues 46–71 (ATASECTIYGLDGATATTVTFKDYQP) lie on the Extracellular side of the membrane. Residues 72 to 92 (FIYLVGSNIAATILEVAAIYV) traverse the membrane as a helical segment. Topologically, residues 93-109 (QVGKGDDVEDAPMIPRV) are cytoplasmic. The helical transmembrane segment at 110–130 (VLVVVDVAVQMLLYSATGAVF) threads the bilayer. Residues 131-158 (AAVMAYGPQISACTGAAGHFCEQVQRSK) are Extracellular-facing. Residues 159 to 179 (IISLAASLSAVLAAVAKDVAL) traverse the membrane as a helical segment. Residues 180-189 (PCSVWPHPSS) are Cytoplasmic-facing.

The protein belongs to the Casparian strip membrane proteins (CASP) family. In terms of assembly, homodimer and heterodimers.

It localises to the cell membrane. The polypeptide is CASP-like protein 1U2 (Sorghum bicolor (Sorghum)).